An 81-amino-acid chain; its full sequence is Large ribosomal subunit protein bL31 (81 aa).

The Zn(2+) site is built by Cys16, Cys18, Cys38, and Cys41.

It belongs to the bacterial ribosomal protein bL31 family. Type A subfamily. In terms of assembly, part of the 50S ribosomal subunit. It depends on Zn(2+) as a cofactor.

In terms of biological role, binds the 23S rRNA. In Mycobacterium sp. (strain JLS), this protein is Large ribosomal subunit protein bL31.